We begin with the raw amino-acid sequence, 65 residues long: uncharacterized protein (65 aa).

Positions 1 to 16 are cleaved as a signal peptide; that stretch reads MMHVCSLLVSFDVVKS.

This is an uncharacterized protein from Saccharomyces cerevisiae (strain ATCC 204508 / S288c) (Baker's yeast).